Reading from the N-terminus, the 947-residue chain is MTPLSSPLSQYWQTVVERLPEGFTETSLSVQAKSVLTFSDFALDSVIAHPEWLAELESASPQADEWRHYAGWLQEALAGVCDDASLMRELRFFRRRIMVRIAWAQTLSLVDDETILQQLSHLAETLIVGARDWLYAACCREWGTPCNPQGVPQPLLILGMGKLGGGELNFSSDIDLIFAWPEHGETRGGRRELDNAQFFTRLGQRLIKALDQPTMDGFVYRVDMRLRPFGDSGPLVLSFAALEDYYQEQGRDWERYAMVKARLMGDNDDAWSRELRAMLRPFVFRRYIDFSVIQSLRNMKGMIAREVRRRGLKDNIKLGAGGIREIEFIVQVFQLIRGGREPSLQSRSLLPTLDAIAALHLLPENDVAQLRVAYLFLRRLENLLQSINDEQTQTLPADDLNRARLAWGMKAENWPQLVGELTDHMANVRRVFNELIGDDEADTPQEEERSEPWREVWQDALQEDDSTPVLAHLADEERRQVLTLIADFRKELDKRPIGPRGRQVLDQLMPHLLADVCSREDAAVTLSRITPLLAGIVTRTTYLELLSEFPGALKHLIMLCAASPMIASQLARYPLLLDELLDPGTLYQPTATDAYRDELRQYLLRVPEEDEEQQLEALRQFKQAQLLRIAAADIAGTLPVMKVSDHLTWLAEAMIDAVVQQAWTQMVARYGQPAHLDERQGRGFAVVGYGKLGGWELGYSSDLDLIFLHDCPMDVMTNGEREIDGRQFYLRLAQRIMHLFSTRTSSGILYEVDARLRPSGAAGMLVTSADAFADYQQHEAWTWEHQALVRARVVYGDPQLTSQFDAVRRTIMTTARDGKTLQTEVREMREKMRAHLGNKHRDRFDIKADEGGITDIEFIAQYLVLRYAHEKPKLTRWSDNVRILELLAQNGIMDEHEAQALTVAYTTLRDELHHLALQELPGHVAQTCFSKERALVQASWRKWLVAV.

An adenylyl removase region spans residues 1 to 440; the sequence is MTPLSSPLSQ…VFNELIGDDE (440 aa). Residues 450–947 form an adenylyl transferase region; it reads SEPWREVWQD…ASWRKWLVAV (498 aa).

It belongs to the GlnE family. It depends on Mg(2+) as a cofactor.

The catalysed reaction is [glutamine synthetase]-O(4)-(5'-adenylyl)-L-tyrosine + phosphate = [glutamine synthetase]-L-tyrosine + ADP. It catalyses the reaction [glutamine synthetase]-L-tyrosine + ATP = [glutamine synthetase]-O(4)-(5'-adenylyl)-L-tyrosine + diphosphate. Its function is as follows. Involved in the regulation of glutamine synthetase GlnA, a key enzyme in the process to assimilate ammonia. When cellular nitrogen levels are high, the C-terminal adenylyl transferase (AT) inactivates GlnA by covalent transfer of an adenylyl group from ATP to specific tyrosine residue of GlnA, thus reducing its activity. Conversely, when nitrogen levels are low, the N-terminal adenylyl removase (AR) activates GlnA by removing the adenylyl group by phosphorolysis, increasing its activity. The regulatory region of GlnE binds the signal transduction protein PII (GlnB) which indicates the nitrogen status of the cell. The chain is Bifunctional glutamine synthetase adenylyltransferase/adenylyl-removing enzyme from Salmonella typhimurium (strain LT2 / SGSC1412 / ATCC 700720).